The chain runs to 470 residues: UDP-N-acetylmuramate--L-alanine ligase (470 aa).

118–124 (GTHGKTT) contributes to the ATP binding site.

It belongs to the MurCDEF family.

It localises to the cytoplasm. It catalyses the reaction UDP-N-acetyl-alpha-D-muramate + L-alanine + ATP = UDP-N-acetyl-alpha-D-muramoyl-L-alanine + ADP + phosphate + H(+). It participates in cell wall biogenesis; peptidoglycan biosynthesis. Its function is as follows. Cell wall formation. The polypeptide is UDP-N-acetylmuramate--L-alanine ligase (Cereibacter sphaeroides (strain KD131 / KCTC 12085) (Rhodobacter sphaeroides)).